We begin with the raw amino-acid sequence, 192 residues long: 21.7 kDa class VI heat shock protein (192 aa).

The sHSP domain occupies 80-192; it reads SLRSLGQCRV…IPKINSKNKF (113 aa).

This sequence belongs to the small heat shock protein (HSP20) family. In terms of assembly, may form oligomeric structures.

The protein localises to the cytoplasm. This Arabidopsis thaliana (Mouse-ear cress) protein is 21.7 kDa class VI heat shock protein (HSP21.7).